Consider the following 483-residue polypeptide: Pre-glycoprotein polyprotein GP complex (483 aa).

Gly2 carries the N-myristoyl glycine; by host lipid modification. At 2-17 the chain is on the extracellular side; it reads GQFISFMQEIPIFLQE. The helical transmembrane segment at 18–32 threads the bilayer; sequence ALNIALVAVSLICIV. A topological domain (cytoplasmic) is located at residue Lys33. A helical transmembrane segment spans residues 34 to 53; it reads GLVNLYRCGLFQLMVFLVLA. Extracellular-side segments run 54-58 and 59-422; these read GRSCS and EETF…TLVD. Cys57 provides a ligand contact to Zn(2+). 2 N-linked (GlcNAc...) asparagine; by host glycosylation sites follow: Asn83 and Asn95. Intrachain disulfides connect Cys92–Cys224, Cys134–Cys162, Cys205–Cys211, Cys269–Cys282, Cys291–Cys300, and Cys354–Cys375. N-linked (GlcNAc...) asparagine; by host glycosylation is found at Asn164 and Asn176. Residues Asn355, Asn363, Asn380, and Asn385 are each glycosylated (N-linked (GlcNAc...) asparagine; by host). Residues 423–443 traverse the membrane as a helical segment; that stretch reads ICFWSTVFFTSTLFLHLIGFP. Over 444 to 483 the chain is Cytoplasmic; sequence THEHIRGEGCPLPHRLNSMGGCRCGKYLPLKKPTIWHRRH. Zn(2+) is bound by residues His445, His447, Cys453, His457, Cys465, Cys467, and His483.

Belongs to the arenaviridae GPC protein family. As to quaternary structure, homotetramer; disulfide-linked. In terms of assembly, homotetramer. GP2 homotetramers bind through ionic interactions with GP1 homotetramers to form the GP complex together with the stable signal peptide. The GP-C polyprotein interacts with the host protease MBTPS1/SKI-1 resulting in the polyprotein processing. Post-translationally, specific enzymatic cleavages in vivo yield mature proteins. GP-C polyprotein is cleaved in the endoplasmic reticulum by the host protease MBTPS1. Only cleaved glycoprotein is incorporated into virions. The SSP remains stably associated with the GP complex following cleavage by signal peptidase and plays crucial roles in the trafficking of GP through the secretory pathway. In terms of processing, myristoylation is necessary for GP2-mediated fusion activity.

It is found in the virion membrane. It localises to the host endoplasmic reticulum membrane. Its subcellular location is the host Golgi apparatus membrane. The protein resides in the host cell membrane. Functionally, class I viral fusion protein that directs fusion of viral and host endosomal membranes, leading to delivery of the nucleocapsid into the cytoplasm. Membrane fusion is mediated by irreversible conformational changes induced upon acidification in the endosome. Stable signal peptide (SSP): cleaved and functions as a signal peptide. In addition, it is also retained as the third component of the GP complex. The SSP is required for efficient glycoprotein expression, post-translational maturation cleavage of GP1 and GP2, glycoprotein transport to the cell surface plasma membrane, formation of infectious virus particles, and acid pH-dependent glycoprotein-mediated cell fusion. Its function is as follows. Interacts with the host receptor. The polypeptide is Pre-glycoprotein polyprotein GP complex (Tacaribe virus (strain V5) (TCRV)).